The primary structure comprises 483 residues: FAD-linked oxidoreductase easE (483 aa).

One can recognise an FAD-binding PCMH-type domain in the interval 10 to 193 (QGRLPFYSAV…TEATVRVFSD (184 aa)).

This sequence belongs to the oxygen-dependent FAD-linked oxidoreductase family. It depends on FAD as a cofactor.

Its pathway is alkaloid biosynthesis; ergot alkaloid biosynthesis. Functionally, FAD-linked oxidoreductase; part of the gene cluster that mediates the biosynthesis of fungal ergot alkaloid. DmaW catalyzes the first step of ergot alkaloid biosynthesis by condensing dimethylallyl diphosphate (DMAP) and tryptophan to form 4-dimethylallyl-L-tryptophan. The second step is catalyzed by the methyltransferase easF that methylates 4-dimethylallyl-L-tryptophan in the presence of S-adenosyl-L-methionine, resulting in the formation of 4-dimethylallyl-L-abrine. The catalase easC and the FAD-dependent oxidoreductase easE then transform 4-dimethylallyl-L-abrine to chanoclavine-I which is further oxidized by easD in the presence of NAD(+), resulting in the formation of chanoclavine-I aldehyde. Agroclavine dehydrogenase easG then mediates the conversion of chanoclavine-I aldehyde to agroclavine via a non-enzymatic adduct reaction: the substrate is an iminium intermediate that is formed spontaneously from chanoclavine-I aldehyde in the presence of glutathione. The presence of easA is not required to complete this reaction. Further conversion of agroclavine to paspalic acid is a two-step process involving oxidation of agroclavine to elymoclavine and of elymoclavine to paspalic acid, the second step being performed by the elymoclavine oxidase cloA. Paspalic acid is then further converted to D-lysergic acid. Ergopeptines are assembled from D-lysergic acid and three different amino acids by the D-lysergyl-peptide-synthetases composed each of a monomudular and a trimodular nonribosomal peptide synthetase subunit. LpsB and lpsC encode the monomodular subunits responsible for D-lysergic acid activation and incorporation into the ergopeptine backbone. LpsA1 and A2 subunits encode the trimodular nonribosomal peptide synthetase assembling the tripeptide portion of ergopeptines. LpsA1 is responsible for formation of the major ergopeptine, ergotamine, and lpsA2 for alpha-ergocryptine, the minor ergopeptine of the total alkaloid mixture elaborated by C.purpurea. D-lysergyl-tripeptides are assembled by the nonribosomal peptide synthetases and released as N-(D-lysergyl-aminoacyl)-lactams. Cyclolization of the D-lysergyl-tripeptides is performed by the Fe(2+)/2-ketoglutarate-dependent dioxygenase easH which introduces a hydroxyl group into N-(D-lysergyl-aminoacyl)-lactam at alpha-C of the aminoacyl residue followed by spontaneous condensation with the terminal lactam carbonyl group. The polypeptide is FAD-linked oxidoreductase easE (Claviceps purpurea (strain 20.1) (Ergot fungus)).